We begin with the raw amino-acid sequence, 199 residues long: 3-isopropylmalate dehydratase small subunit (199 aa).

The protein belongs to the LeuD family. LeuD type 1 subfamily. In terms of assembly, heterodimer of LeuC and LeuD.

It catalyses the reaction (2R,3S)-3-isopropylmalate = (2S)-2-isopropylmalate. Its pathway is amino-acid biosynthesis; L-leucine biosynthesis; L-leucine from 3-methyl-2-oxobutanoate: step 2/4. Functionally, catalyzes the isomerization between 2-isopropylmalate and 3-isopropylmalate, via the formation of 2-isopropylmaleate. In Mycobacteroides abscessus (strain ATCC 19977 / DSM 44196 / CCUG 20993 / CIP 104536 / JCM 13569 / NCTC 13031 / TMC 1543 / L948) (Mycobacterium abscessus), this protein is 3-isopropylmalate dehydratase small subunit.